The chain runs to 251 residues: Ubiquinone/menaquinone biosynthesis C-methyltransferase UbiE (251 aa).

S-adenosyl-L-methionine contacts are provided by residues Thr-74, Asp-95, 123–124 (NA), and Ser-140.

The protein belongs to the class I-like SAM-binding methyltransferase superfamily. MenG/UbiE family.

It catalyses the reaction a 2-demethylmenaquinol + S-adenosyl-L-methionine = a menaquinol + S-adenosyl-L-homocysteine + H(+). The enzyme catalyses a 2-methoxy-6-(all-trans-polyprenyl)benzene-1,4-diol + S-adenosyl-L-methionine = a 5-methoxy-2-methyl-3-(all-trans-polyprenyl)benzene-1,4-diol + S-adenosyl-L-homocysteine + H(+). It participates in quinol/quinone metabolism; menaquinone biosynthesis; menaquinol from 1,4-dihydroxy-2-naphthoate: step 2/2. It functions in the pathway cofactor biosynthesis; ubiquinone biosynthesis. Functionally, methyltransferase required for the conversion of demethylmenaquinol (DMKH2) to menaquinol (MKH2) and the conversion of 2-polyprenyl-6-methoxy-1,4-benzoquinol (DDMQH2) to 2-polyprenyl-3-methyl-6-methoxy-1,4-benzoquinol (DMQH2). This is Ubiquinone/menaquinone biosynthesis C-methyltransferase UbiE from Photorhabdus laumondii subsp. laumondii (strain DSM 15139 / CIP 105565 / TT01) (Photorhabdus luminescens subsp. laumondii).